Consider the following 257-residue polypeptide: Glycerol-3-phosphate acyltransferase (257 aa).

Transmembrane regions (helical) follow at residues Ile7–Ser27, Ile66–Ile86, Ala104–Phe124, Ile140–Ile160, Met164–Ile184, and Tyr203–Ile223.

This sequence belongs to the PlsY family. As to quaternary structure, probably interacts with PlsX.

It localises to the cell membrane. It catalyses the reaction an acyl phosphate + sn-glycerol 3-phosphate = a 1-acyl-sn-glycero-3-phosphate + phosphate. Its pathway is lipid metabolism; phospholipid metabolism. In terms of biological role, catalyzes the transfer of an acyl group from acyl-phosphate (acyl-PO(4)) to glycerol-3-phosphate (G3P) to form lysophosphatidic acid (LPA). This enzyme utilizes acyl-phosphate as fatty acyl donor, but not acyl-CoA or acyl-ACP. The protein is Glycerol-3-phosphate acyltransferase of Ureaplasma parvum serovar 3 (strain ATCC 700970).